The following is a 304-amino-acid chain: MDQPDIEHINAYLLALQETICAALTAADGGAVFHEDLWQRDEGGGGRTRVLRQGRVFEQAGVNFSRVYGGALPASATAHRPELAGRSYQAMGVSLVVHPENPYIPTSHANVRFFIAEKPGAEPIWWFGGGFDLTPFYGFHEDAVHWHRTAQALCQPFGDTVYPRYKRWCDDYFFLKHRNEARGIGGLFFDDLSAPNFNEAFAFCRAVSQGYLDAYLPIVERRKSHPWGERERQFQLYRRGRYVEFNLVWDRGTLFGLQSGGRTESVLMSMPPLARWQYHYDPAHDSPEAALYRDFLPARDWLKE.

Substrate is bound at residue S94. Residues H98 and H108 each contribute to the a divalent metal cation site. The active-site Proton donor is the H108. 110–112 (NVR) is a substrate binding site. A divalent metal cation-binding residues include H147 and H177. An important for dimerization region spans residues 242–277 (YVEFNLVWDRGTLFGLQSGGRTESVLMSMPPLARWQ). Residue 260–262 (GGR) participates in substrate binding.

It belongs to the aerobic coproporphyrinogen-III oxidase family. As to quaternary structure, homodimer. The cofactor is a divalent metal cation.

Its subcellular location is the cytoplasm. The catalysed reaction is coproporphyrinogen III + O2 + 2 H(+) = protoporphyrinogen IX + 2 CO2 + 2 H2O. Its pathway is porphyrin-containing compound metabolism; protoporphyrin-IX biosynthesis; protoporphyrinogen-IX from coproporphyrinogen-III (O2 route): step 1/1. In terms of biological role, involved in the heme biosynthesis. Catalyzes the aerobic oxidative decarboxylation of propionate groups of rings A and B of coproporphyrinogen-III to yield the vinyl groups in protoporphyrinogen-IX. The polypeptide is Oxygen-dependent coproporphyrinogen-III oxidase (Sodalis glossinidius (strain morsitans)).